The primary structure comprises 168 residues: Small ribosomal subunit protein uS9 (168 aa).

Low complexity predominate over residues 1–29 (MAQNEELTAEAVEAEETLTSYTSESTSAE). Residues 1-36 (MAQNEELTAEAVEAEETLTSYTSESTSAEDAPKKER) form a disordered region.

This sequence belongs to the universal ribosomal protein uS9 family.

The polypeptide is Small ribosomal subunit protein uS9 (Paenarthrobacter aurescens (strain TC1)).